The chain runs to 144 residues: Universal stress protein F (144 aa).

Belongs to the universal stress protein A family. Homodimer.

The protein is Universal stress protein F (uspF) of Escherichia coli (strain K12).